A 449-amino-acid chain; its full sequence is Asparagine--tRNA ligase (449 aa).

Belongs to the class-II aminoacyl-tRNA synthetase family. Homodimer.

The protein resides in the cytoplasm. The catalysed reaction is tRNA(Asn) + L-asparagine + ATP = L-asparaginyl-tRNA(Asn) + AMP + diphosphate + H(+). The protein is Asparagine--tRNA ligase of Deinococcus geothermalis (strain DSM 11300 / CIP 105573 / AG-3a).